Consider the following 510-residue polypeptide: F-box only protein 15 (510 aa).

In terms of domain architecture, F-box spans 77-117 (MPSEILLKIFSYLDAVSLLCTGCVSRRFYHLANDNFIWIGI).

Directly interacts with SKP1 and CUL1.

Its function is as follows. Substrate-recognition component of the SCF (SKP1-CUL1-F-box protein)-type E3 ubiquitin ligase complex. The chain is F-box only protein 15 (FBXO15) from Homo sapiens (Human).